The chain runs to 145 residues: Sporulation-specific cell division protein Francci3_3418 (145 aa).

Belongs to the SsgA family.

It localises to the cell septum. Functionally, involved in sporulation-specific cell division. This chain is Sporulation-specific cell division protein Francci3_3418, found in Frankia casuarinae (strain DSM 45818 / CECT 9043 / HFP020203 / CcI3).